Consider the following 398-residue polypeptide: 1-deoxy-D-xylulose 5-phosphate reductoisomerase (398 aa).

NADPH-binding residues include Thr-10, Gly-11, Ser-12, Ile-13, Lys-37, Asn-38, and Asn-124. 1-deoxy-D-xylulose 5-phosphate is bound at residue Lys-125. Glu-126 lines the NADPH pocket. Asp-150 serves as a coordination point for Mn(2+). Positions 151, 152, 186, and 209 each coordinate 1-deoxy-D-xylulose 5-phosphate. Glu-152 lines the Mn(2+) pocket. Gly-215 lines the NADPH pocket. Residues Ser-222, Asn-227, Lys-228, and Glu-231 each coordinate 1-deoxy-D-xylulose 5-phosphate. A Mn(2+)-binding site is contributed by Glu-231.

It belongs to the DXR family. Homodimer. Mg(2+) is required as a cofactor. Mn(2+) serves as cofactor.

The catalysed reaction is 2-C-methyl-D-erythritol 4-phosphate + NADP(+) = 1-deoxy-D-xylulose 5-phosphate + NADPH + H(+). It functions in the pathway isoprenoid biosynthesis; isopentenyl diphosphate biosynthesis via DXP pathway; isopentenyl diphosphate from 1-deoxy-D-xylulose 5-phosphate: step 1/6. In terms of biological role, catalyzes the NADPH-dependent rearrangement and reduction of 1-deoxy-D-xylulose-5-phosphate (DXP) to 2-C-methyl-D-erythritol 4-phosphate (MEP). This chain is 1-deoxy-D-xylulose 5-phosphate reductoisomerase, found in Buchnera aphidicola subsp. Schizaphis graminum (strain Sg).